The following is a 379-amino-acid chain: MGVMNTEYQSHLIQEIRQNNYRLERGDVTILLAEAFGFCWGVERAVAMAYETRQHFPGDRLWITNEIIHNPSVNQRLREMEVNFIDVVNGEKDFSGVAKGDVVILPAFGASVEEMQLLNDRECTIVDTTCPWVSKVWNSVEKHKKKEHTSIIHGKYNHEETIATSSFAGTYLIVLNMAEAQKVCDYILHGGDRQEFLDYFANAHSAGFDPDQDLVRLGVANQTTMLKSETEMIGKLFEKTLLQKYGPIELNNHFMSFNTICDATQERQDAMFDLVEEDLSLMVVIGGFNSSNTTHLQEIAVEHGIPSVHIDSGDRIGPGNRVEHKPLGKDLEVLEPWLPAGKITVGVTSGASTPDKVVEEVMKKILAIKEAQPVLEIAG.

Cys39 is a binding site for [4Fe-4S] cluster. His69 provides a ligand contact to (2E)-4-hydroxy-3-methylbut-2-enyl diphosphate. His69 contacts dimethylallyl diphosphate. Position 69 (His69) interacts with isopentenyl diphosphate. Cys130 is a [4Fe-4S] cluster binding site. A (2E)-4-hydroxy-3-methylbut-2-enyl diphosphate-binding site is contributed by His158. His158 provides a ligand contact to dimethylallyl diphosphate. His158 is a binding site for isopentenyl diphosphate. Catalysis depends on Glu160, which acts as the Proton donor. Thr223 is a binding site for (2E)-4-hydroxy-3-methylbut-2-enyl diphosphate. Cys261 is a binding site for [4Fe-4S] cluster. Ser290, Ser291, Asn292, and Ser352 together coordinate (2E)-4-hydroxy-3-methylbut-2-enyl diphosphate. Dimethylallyl diphosphate is bound by residues Ser290, Ser291, Asn292, and Ser352. Isopentenyl diphosphate is bound by residues Ser290, Ser291, Asn292, and Ser352.

It belongs to the IspH family. The cofactor is [4Fe-4S] cluster.

It catalyses the reaction isopentenyl diphosphate + 2 oxidized [2Fe-2S]-[ferredoxin] + H2O = (2E)-4-hydroxy-3-methylbut-2-enyl diphosphate + 2 reduced [2Fe-2S]-[ferredoxin] + 2 H(+). It carries out the reaction dimethylallyl diphosphate + 2 oxidized [2Fe-2S]-[ferredoxin] + H2O = (2E)-4-hydroxy-3-methylbut-2-enyl diphosphate + 2 reduced [2Fe-2S]-[ferredoxin] + 2 H(+). It functions in the pathway isoprenoid biosynthesis; dimethylallyl diphosphate biosynthesis; dimethylallyl diphosphate from (2E)-4-hydroxy-3-methylbutenyl diphosphate: step 1/1. The protein operates within isoprenoid biosynthesis; isopentenyl diphosphate biosynthesis via DXP pathway; isopentenyl diphosphate from 1-deoxy-D-xylulose 5-phosphate: step 6/6. In terms of biological role, catalyzes the conversion of 1-hydroxy-2-methyl-2-(E)-butenyl 4-diphosphate (HMBPP) into a mixture of isopentenyl diphosphate (IPP) and dimethylallyl diphosphate (DMAPP). Acts in the terminal step of the DOXP/MEP pathway for isoprenoid precursor biosynthesis. In Synechocystis sp. (strain ATCC 27184 / PCC 6803 / Kazusa), this protein is 4-hydroxy-3-methylbut-2-enyl diphosphate reductase.